The chain runs to 411 residues: Pre-mRNA-splicing factor dre4 (411 aa).

Positions 3–36 (QPLPPGWTEHKAPSGIPYYWNAELKKSTYQRPSF) constitute a WW 1 domain. Residues 65 to 84 (NAEERKNSRDLRKQLPDRPK) are disordered. Residues 66–83 (AEERKNSRDLRKQLPDRP) are compositionally biased toward basic and acidic residues. The WW 2 domain maps to 89-122 (IPNNDSWVVVFTKKNRYFFHNLKSHESYWEPPLE). Residues 138–209 (ISKDSSQSQN…KSHSAEELEF (72 aa)) form a disordered region. A compositionally biased stretch (polar residues) spans 140-151 (KDSSQSQNVDSG). The span at 152–166 (KTNHEEIHESRHLQT) shows a compositional bias: basic and acidic residues. A compositionally biased stretch (acidic residues) spans 167-179 (EIEEPSGLEESSE). Positions 239-293 (TDDARRVFTELLKDKNIGAYQPWELVYPKLLDDDRFYVLDSGERRKEVFEEYCKS) constitute an FF domain.

In terms of assembly, component of the spliceosomal complex. Interacts with prp19.

Its subcellular location is the nucleus. Its function is as follows. Component of the spliceosome involved in mRNA processing. The polypeptide is Pre-mRNA-splicing factor dre4 (dre4) (Schizosaccharomyces pombe (strain 972 / ATCC 24843) (Fission yeast)).